Reading from the N-terminus, the 75-residue chain is U9-theraphotoxin-Cg1a (75 aa).

The N-terminal stretch at 1–21 (MKTLVLFIIFGLAALFLLSSA) is a signal peptide. Residues 22–29 (NELEETER) constitute a propeptide that is removed on maturation. Cystine bridges form between cysteine 31–cysteine 46, cysteine 38–cysteine 51, and cysteine 45–cysteine 58.

This sequence belongs to the neurotoxin 10 (Hwtx-1) family. 43 (Jztx-49) subfamily. In terms of tissue distribution, expressed by the venom gland.

It localises to the secreted. Its function is as follows. Probable ion channel inhibitor. This is U9-theraphotoxin-Cg1a from Chilobrachys guangxiensis (Chinese earth tiger tarantula).